The sequence spans 359 residues: 3-dehydroquinate synthase (359 aa).

NAD(+) contacts are provided by residues 70 to 75 (DAEGGK), 104 to 108 (GAATD), 128 to 129 (TT), Lys141, and Lys150. Zn(2+)-binding residues include Glu183, His246, and His262.

It belongs to the sugar phosphate cyclases superfamily. Dehydroquinate synthase family. The cofactor is Co(2+). It depends on Zn(2+) as a cofactor. Requires NAD(+) as cofactor.

It is found in the cytoplasm. The catalysed reaction is 7-phospho-2-dehydro-3-deoxy-D-arabino-heptonate = 3-dehydroquinate + phosphate. It functions in the pathway metabolic intermediate biosynthesis; chorismate biosynthesis; chorismate from D-erythrose 4-phosphate and phosphoenolpyruvate: step 2/7. Its function is as follows. Catalyzes the conversion of 3-deoxy-D-arabino-heptulosonate 7-phosphate (DAHP) to dehydroquinate (DHQ). The polypeptide is 3-dehydroquinate synthase (Mycolicibacterium vanbaalenii (strain DSM 7251 / JCM 13017 / BCRC 16820 / KCTC 9966 / NRRL B-24157 / PYR-1) (Mycobacterium vanbaalenii)).